Reading from the N-terminus, the 271-residue chain is Protein FAM110D (271 aa).

Over residues 1–13 the composition is skewed to polar residues; sequence MLLSSPTTPSRGR. Disordered stretches follow at residues 1-84, 118-149, and 186-242; these read MLLS…PDSL, DAAPSSPAPTERPGAPAGWAGSPDTPEATGKR, and PQSW…GRPT.

It belongs to the FAM110 family.

This Mus musculus (Mouse) protein is Protein FAM110D.